We begin with the raw amino-acid sequence, 252 residues long: 2-succinyl-6-hydroxy-2,4-cyclohexadiene-1-carboxylate synthase (252 aa).

This sequence belongs to the AB hydrolase superfamily. MenH family. In terms of assembly, monomer.

The enzyme catalyses 5-enolpyruvoyl-6-hydroxy-2-succinyl-cyclohex-3-ene-1-carboxylate = (1R,6R)-6-hydroxy-2-succinyl-cyclohexa-2,4-diene-1-carboxylate + pyruvate. It functions in the pathway quinol/quinone metabolism; 1,4-dihydroxy-2-naphthoate biosynthesis; 1,4-dihydroxy-2-naphthoate from chorismate: step 3/7. Its pathway is quinol/quinone metabolism; menaquinone biosynthesis. Functionally, catalyzes a proton abstraction reaction that results in 2,5-elimination of pyruvate from 2-succinyl-5-enolpyruvyl-6-hydroxy-3-cyclohexene-1-carboxylate (SEPHCHC) and the formation of 2-succinyl-6-hydroxy-2,4-cyclohexadiene-1-carboxylate (SHCHC). The chain is 2-succinyl-6-hydroxy-2,4-cyclohexadiene-1-carboxylate synthase from Escherichia coli O9:H4 (strain HS).